A 211-amino-acid polypeptide reads, in one-letter code: Peptidyl-tRNA hydrolase (211 aa).

Residue tyrosine 17 coordinates tRNA. The active-site Proton acceptor is histidine 22. Residues phenylalanine 79, asparagine 81, and asparagine 127 each contribute to the tRNA site.

This sequence belongs to the PTH family. As to quaternary structure, monomer.

It localises to the cytoplasm. It carries out the reaction an N-acyl-L-alpha-aminoacyl-tRNA + H2O = an N-acyl-L-amino acid + a tRNA + H(+). Hydrolyzes ribosome-free peptidyl-tRNAs (with 1 or more amino acids incorporated), which drop off the ribosome during protein synthesis, or as a result of ribosome stalling. Its function is as follows. Catalyzes the release of premature peptidyl moieties from peptidyl-tRNA molecules trapped in stalled 50S ribosomal subunits, and thus maintains levels of free tRNAs and 50S ribosomes. The chain is Peptidyl-tRNA hydrolase from Solidesulfovibrio magneticus (strain ATCC 700980 / DSM 13731 / RS-1) (Desulfovibrio magneticus).